The chain runs to 514 residues: Peptide chain release factor 3 (514 aa).

A tr-type G domain is found at 8 to 268 (KKRRTFAIIS…TFLKFAPEPH (261 aa)). GTP is bound by residues 17–24 (SHPDAGKT), 85–89 (DTPGH), and 139–142 (NKLD).

The protein belongs to the TRAFAC class translation factor GTPase superfamily. Classic translation factor GTPase family. PrfC subfamily.

The protein resides in the cytoplasm. Its function is as follows. Increases the formation of ribosomal termination complexes and stimulates activities of RF-1 and RF-2. It binds guanine nucleotides and has strong preference for UGA stop codons. It may interact directly with the ribosome. The stimulation of RF-1 and RF-2 is significantly reduced by GTP and GDP, but not by GMP. In Streptococcus thermophilus (strain CNRZ 1066), this protein is Peptide chain release factor 3.